The primary structure comprises 328 residues: tRNA dimethylallyltransferase (328 aa).

25-32 (GNTGSGKS) serves as a coordination point for ATP. Residue 27–32 (TGSGKS) coordinates substrate. The tract at residues 50 to 53 (DSRQ) is interaction with substrate tRNA.

Belongs to the IPP transferase family. As to quaternary structure, monomer. It depends on Mg(2+) as a cofactor.

It carries out the reaction adenosine(37) in tRNA + dimethylallyl diphosphate = N(6)-dimethylallyladenosine(37) in tRNA + diphosphate. Functionally, catalyzes the transfer of a dimethylallyl group onto the adenine at position 37 in tRNAs that read codons beginning with uridine, leading to the formation of N6-(dimethylallyl)adenosine (i(6)A). The protein is tRNA dimethylallyltransferase of Dehalococcoides mccartyi (strain ATCC BAA-2100 / JCM 16839 / KCTC 5957 / BAV1).